The primary structure comprises 313 residues: Phosphoenolpyruvate phosphomutase (313 aa).

Catalysis depends on aspartate 69, which acts as the Nucleophile.

The protein belongs to the isocitrate lyase/PEP mutase superfamily. PEP mutase family.

It carries out the reaction phosphoenolpyruvate + H(+) = 3-phosphonopyruvate. Its pathway is secondary metabolite biosynthesis; bialaphos biosynthesis. In terms of biological role, formation of a carbon-phosphorus bond by converting phosphoenolpyruvate (PEP) to phosphonopyruvate (P-Pyr). The protein is Phosphoenolpyruvate phosphomutase (bcpB) of Streptomyces hygroscopicus.